The following is a 290-amino-acid chain: Dihydroorotate dehydrogenase B (NAD(+)), catalytic subunit (290 aa).

Residues serine 17 and 42-43 (KT) each bind FMN. Substrate contacts are provided by residues lysine 42, 67–71 (NAIGL), and asparagine 117. Asparagine 117 contributes to the FMN binding site. Serine 120 acts as the Nucleophile in catalysis. FMN contacts are provided by lysine 152 and isoleucine 177. Residue 178-179 (NT) participates in substrate binding. FMN is bound by residues glycine 203, 229-230 (GG), and 251-252 (GT).

The protein belongs to the dihydroorotate dehydrogenase family. Type 1 subfamily. In terms of assembly, heterotetramer of 2 PyrK and 2 PyrD type B subunits. FMN is required as a cofactor.

Its subcellular location is the cytoplasm. It catalyses the reaction (S)-dihydroorotate + NAD(+) = orotate + NADH + H(+). Its pathway is pyrimidine metabolism; UMP biosynthesis via de novo pathway; orotate from (S)-dihydroorotate (NAD(+) route): step 1/1. Catalyzes the conversion of dihydroorotate to orotate with NAD(+) as electron acceptor. The chain is Dihydroorotate dehydrogenase B (NAD(+)), catalytic subunit (pyrD) from Saccharolobus solfataricus (strain ATCC 35092 / DSM 1617 / JCM 11322 / P2) (Sulfolobus solfataricus).